The chain runs to 155 residues: Cardioactive peptide (155 aa).

The N-terminal stretch at methionine 1–alanine 23 is a signal peptide. The propeptide occupies serine 24 to glutamate 49. An intrachain disulfide couples cysteine 54 to cysteine 60. Position 60 is a cysteine amide (cysteine 60). A propeptide spanning residues arginine 64 to lysine 155 is cleaved from the precursor. The segment at asparagine 135–lysine 155 is disordered. Basic and acidic residues predominate over residues glutamine 141 to lysine 155.

As to expression, central nervous system; most neurons exhibit coexpression with Burs.

It localises to the secreted. Functionally, cardioregulatory neurohormone that increases heart beat rate during adult wing inflation; has no effect on beat amplitude. The effect of CCAP is both ino- and chronotropic. The protein is Cardioactive peptide of Drosophila melanogaster (Fruit fly).